The sequence spans 282 residues: Acetyl-coenzyme A carboxylase carboxyl transferase subunit beta (282 aa).

The region spanning 25-282 is the CoA carboxyltransferase N-terminal domain; sequence VWRKCPHCNE…SQMLRIFMKQ (258 aa). 4 residues coordinate Zn(2+): C29, C32, C48, and C51. The segment at 29–51 adopts a C4-type zinc-finger fold; that stretch reads CPHCNEIIYAKEIERNLNVCPKC.

The protein belongs to the AccD/PCCB family. In terms of assembly, acetyl-CoA carboxylase is a heterohexamer composed of biotin carboxyl carrier protein (AccB), biotin carboxylase (AccC) and two subunits each of ACCase subunit alpha (AccA) and ACCase subunit beta (AccD). It depends on Zn(2+) as a cofactor.

It localises to the cytoplasm. The catalysed reaction is N(6)-carboxybiotinyl-L-lysyl-[protein] + acetyl-CoA = N(6)-biotinyl-L-lysyl-[protein] + malonyl-CoA. It functions in the pathway lipid metabolism; malonyl-CoA biosynthesis; malonyl-CoA from acetyl-CoA: step 1/1. Component of the acetyl coenzyme A carboxylase (ACC) complex. Biotin carboxylase (BC) catalyzes the carboxylation of biotin on its carrier protein (BCCP) and then the CO(2) group is transferred by the transcarboxylase to acetyl-CoA to form malonyl-CoA. The sequence is that of Acetyl-coenzyme A carboxylase carboxyl transferase subunit beta from Syntrophotalea carbinolica (strain DSM 2380 / NBRC 103641 / GraBd1) (Pelobacter carbinolicus).